The chain runs to 425 residues: Ribosome biogenesis protein WDR12 homolog (425 aa).

Positions 13–94 (LQLHLITKQK…EDTVELEYVE (82 aa)) are ubiquitin-like (UBL) domain. 7 WD repeats span residues 106–143 (LHDD…KLTI), 145–187 (GHIA…NSVE), 194–233 (GHER…GGGD), 258–296 (GHRE…IKSE), 298–337 (SGNK…GTLV), 343–383 (GHTQ…APIF), and 387–425 (GHED…GGEK). A disordered region spans residues 227–247 (VRSGGGDSEPSTSKRQKLDQG).

This sequence belongs to the WD repeat WDR12/YTM1 family.

It is found in the nucleus. Its subcellular location is the nucleolus. The protein resides in the nucleoplasm. In terms of biological role, required for maturation of ribosomal RNAs and formation of the large ribosomal subunit. This Culex quinquefasciatus (Southern house mosquito) protein is Ribosome biogenesis protein WDR12 homolog.